A 395-amino-acid chain; its full sequence is MAKENFDRSKPHVNVGTIGHVDHGKTTLTAAITKVLADKGLAEKRDFSQIDNAPEEKERGITINTSHVEYATATRHYAHVDCPGHADYVKNMVTGAAQMDGAILVVAATDGPMPQTREHILLARQVGVPAMVVFMNKVDLVDDPELLELVEMEIRELLSFYNFPGDTMSIIKGSALGGLNADPKWVATIEELMNAVDNDIPIPPRLTDQPFLMPVEDVFSITGRGTVATGRIERGVINSGEGVDIIGFGAENLKSTVTGVEMFRKILDRGEAGDNVGLLLRGIEKESIKRGMVICKPGSVKPHSEFKGEIYVLSKEEGGRHTPFFNKYRPQFYMRTTDVTGEIELPAGTEMVMPGDNITITVKLIAAIALEKGLRFAIREGGRTVGAGQVTEILK.

One can recognise a tr-type G domain in the interval 10–205; that stretch reads KPHVNVGTIG…VDNDIPIPPR (196 aa). The tract at residues 19 to 26 is G1; sequence GHVDHGKT. 19 to 26 serves as a coordination point for GTP; the sequence is GHVDHGKT. A Mg(2+)-binding site is contributed by Thr-26. Residues 60–64 form a G2 region; that stretch reads GITIN. Positions 81–84 are G3; the sequence is DCPG. GTP-binding positions include 81–85 and 136–139; these read DCPGH and NKVD. The segment at 136-139 is G4; that stretch reads NKVD. The interval 174-176 is G5; sequence SAL.

It belongs to the TRAFAC class translation factor GTPase superfamily. Classic translation factor GTPase family. EF-Tu/EF-1A subfamily. Monomer.

The protein localises to the cytoplasm. It catalyses the reaction GTP + H2O = GDP + phosphate + H(+). In terms of biological role, GTP hydrolase that promotes the GTP-dependent binding of aminoacyl-tRNA to the A-site of ribosomes during protein biosynthesis. In Cytophaga hutchinsonii (strain ATCC 33406 / DSM 1761 / CIP 103989 / NBRC 15051 / NCIMB 9469 / D465), this protein is Elongation factor Tu.